The primary structure comprises 134 residues: Salivary protein 15 Iric-1 (134 aa).

Positions 1–21 are cleaved as a signal peptide; the sequence is MESFVAMKVVCITVLFVIVAV. Asn-22 carries N-linked (GlcNAc...) asparagine glycosylation. The tract at residues 48 to 67 is required for Borrelia OspC-binding; it reads PSYIRNPQKLALELLEICKN. 2 N-linked (GlcNAc...) asparagine glycosylation sites follow: Asn-91 and Asn-103. The tract at residues 115-134 is CD4-binding; it reads GPNGETCAEKSKCVGHIPGC.

Belongs to the salp15 family. As to quaternary structure, monomer. Interacts with host CD4. Interacts with host DC-SIGN (CD209). In terms of assembly, (Microbial infection) Interacts with Borrelia outer surface protein C (OspC). As to expression, expressed in salivary glands. Detected in fed adult female.

The protein localises to the secreted. Salivary tick protein that downregulates host immune system by binding to both dendritic cells, and CD4(+) T cells. Specifically binds to the CD4 coreceptor on T cells. This interaction prevents the activation of the Src kinase, Lck, and its downstream substrate Zap-70, and results in deficient activation of PLCgamma1, the repression of calcium fluxes triggered by T-cell antigen receptor (TCR) ligation, and a subsequent reduction in interleukin-2 production. This salivary protein also binds to DC-SIGN (CD209) on dendritic cells (DC) and activates the Raf-1 kinase/MEK signaling pathway that results in down-regulating expression of pro-inflammatory cytokines. Furthermore, it inhibits T cell proliferation induced by DCs. In addition, it inhibits in vitro keratinocyte inflammation induced by Borrelia burgdorferi or by the major outer surface protein (OspC) of Borrelia. In addition, it downregulates chemokines and monocyte chemoattractant protein 1, as well as several antimicrobial peptides such as defensins, cathelicidin, psoriasin, and RNase 7. Apart from its immunomodulatory activities, it is also associated with protection of Borrelia spirochetes from antibody-mediated killing through its binding to OspC. In vivo, tests on different immune disease animal models show promising therapeutic results, e.g., in inhibiting HIV infection, experimental autoimmune encephalomyelitis, transplantation rejection, and asthma. Its function is as follows. (Microbial infection) Protects Borrelia garinii (strain VSBP) from host complement-mediated killing by binding to the surface of spirochetes and preventing deposition of host C5b-9 membrane attack complexes. Protects Borrelia garinii (strain A87S) from host complement-mediated killing. In terms of biological role, (Microbial infection) Partially protects Borrelia burgdorferi (strains VS215 and B31) from host complement-mediated killing. This is Salivary protein 15 Iric-1 from Ixodes ricinus (Common tick).